We begin with the raw amino-acid sequence, 149 residues long: Transcriptional repressor NrdR (149 aa).

The segment at 3–34 is a zinc-finger region; the sequence is CPFCAAVDTKVIDSRLVGDGSQVRRRRQCLEC. Positions 49-139 constitute an ATP-cone domain; the sequence is PRVIKSDDIR…VYRSFEDIRE (91 aa).

The protein belongs to the NrdR family. It depends on Zn(2+) as a cofactor.

Its function is as follows. Negatively regulates transcription of bacterial ribonucleotide reductase nrd genes and operons by binding to NrdR-boxes. The chain is Transcriptional repressor NrdR from Photorhabdus laumondii subsp. laumondii (strain DSM 15139 / CIP 105565 / TT01) (Photorhabdus luminescens subsp. laumondii).